The sequence spans 95 residues: Citrate lyase acyl carrier protein (95 aa).

The residue at position 14 (Ser14) is an O-(phosphoribosyl dephospho-coenzyme A)serine.

It belongs to the CitD family. Oligomer with a subunit composition of (alpha,beta,gamma)6.

It is found in the cytoplasm. Functionally, covalent carrier of the coenzyme of citrate lyase. The chain is Citrate lyase acyl carrier protein from Haemophilus influenzae (strain PittEE).